A 651-amino-acid chain; its full sequence is Bromodomain-containing protein 7 (651 aa).

2 disordered regions span residues 36-133 (ELST…EVEQ) and 257-298 (KDKV…KKKD). The span at 58–69 (HKDRKRKKRKKG) shows a compositional bias: basic residues. Residues 65 to 96 (KRKKGEKQVPGEEKEKRKRKVKEDKRKRDREH) carry the Nuclear localization signal motif. Residues 70-105 (EKQVPGEEKEKRKRKVKEDKRKRDREHPDSEGEQEL) are compositionally biased toward basic and acidic residues. A Bromo domain is found at 131 to 235 (VEQTPLQEAL…HSGMKILSQE (105 aa)). Residues 271–298 (GSGKDKGEPVDGDTKAFKTPNKEHKKKD) are compositionally biased toward basic and acidic residues. Residues 533–564 (SEEAEIFQRKLDETTKLLRELQDAQNERLSTK) are a coiled coil.

Its subcellular location is the nucleus. It localises to the chromosome. Acts both as coactivator and as corepressor. May play a role in chromatin remodeling. Participates in the Wnt signaling pathway. Transcriptional corepressor that down-regulates the expression of target genes. Binds to target promoters, leading to increased histone H3 acetylation. Coactivator for TP53-mediated activation of transcription of a set of target genes. Required for TP53-mediated cell-cycle arrest in response to oncogene activation. Inhibits cell cycle progression from G1 to S phase. The sequence is that of Bromodomain-containing protein 7 (BRD7) from Gallus gallus (Chicken).